A 131-amino-acid chain; its full sequence is uncharacterized protein (131 aa).

This is an uncharacterized protein from Archaeoglobus fulgidus (strain ATCC 49558 / DSM 4304 / JCM 9628 / NBRC 100126 / VC-16).